A 451-amino-acid polypeptide reads, in one-letter code: Tubulin alpha chain (451 aa).

The short motif at 1–4 (MREC) is the MREC motif element. Gln-11 is a binding site for GTP. Lys-40 is subject to N6-acetyllysine. The GTP site is built by Glu-71, Ser-140, Gly-144, Thr-145, Thr-179, Asn-206, and Asn-228. Residue Glu-71 participates in Mg(2+) binding. Residue Glu-254 is part of the active site. Positions 432–451 (YEEVGVDSVEGEGEEEGEEY) are disordered. The residue at position 445 (Glu-445) is a 5-glutamyl polyglutamate.

The protein belongs to the tubulin family. As to quaternary structure, dimer of alpha and beta chains. A typical microtubule is a hollow water-filled tube with an outer diameter of 25 nm and an inner diameter of 15 nM. Alpha-beta heterodimers associate head-to-tail to form protofilaments running lengthwise along the microtubule wall with the beta-tubulin subunit facing the microtubule plus end conferring a structural polarity. Microtubules usually have 13 protofilaments but different protofilament numbers can be found in some organisms and specialized cells. Mg(2+) is required as a cofactor. In terms of processing, some glutamate residues at the C-terminus are polyglycylated, resulting in polyglycine chains on the gamma-carboxyl group. Glycylation is mainly limited to tubulin incorporated into axonemes (cilia and flagella) whereas glutamylation is prevalent in neuronal cells, centrioles, axonemes, and the mitotic spindle. Both modifications can coexist on the same protein on adjacent residues, and lowering polyglycylation levels increases polyglutamylation, and reciprocally. The precise function of polyglycylation is still unclear. Post-translationally, some glutamate residues at the C-terminus are polyglutamylated, resulting in polyglutamate chains on the gamma-carboxyl group. Polyglutamylation plays a key role in microtubule severing by spastin (SPAST). SPAST preferentially recognizes and acts on microtubules decorated with short polyglutamate tails: severing activity by SPAST increases as the number of glutamates per tubulin rises from one to eight, but decreases beyond this glutamylation threshold. Acetylation of alpha chains at Lys-40 is located inside the microtubule lumen. This modification has been correlated with increased microtubule stability, intracellular transport and ciliary assembly. In terms of processing, undergoes a tyrosination/detyrosination cycle, the cyclic removal and re-addition of a C-terminal tyrosine residue by the enzymes tubulin tyrosine carboxypeptidase (MATCAP, VASH1 or VASH2) and tubulin tyrosine ligase (TTL), respectively. Post-translationally, tyrosination promotes microtubule interaction with CAP-Gly microtubule plus-end tracking proteins. Tyrosinated tubulins regulate the initiation of dynein-driven motility. Detyrosination is involved in metaphase plate congression by guiding chromosomes during mitosis. Detyrosination increases microtubules-dependent mechanotransduction in dystrophic cardiac and skeletal muscle. In cardiomyocytes, detyrosinated microtubules are required to resist to contractile compression during contraction.

It is found in the cytoplasm. The protein localises to the cytoskeleton. It carries out the reaction GTP + H2O = GDP + phosphate + H(+). Functionally, tubulin is the major constituent of microtubules, a cylinder consisting of laterally associated linear protofilaments composed of alpha- and beta-tubulin heterodimers. Microtubules grow by the addition of GTP-tubulin dimers to the microtubule end, where a stabilizing cap forms. Below the cap, tubulin dimers are in GDP-bound state, owing to GTPase activity of alpha-tubulin. The chain is Tubulin alpha chain from Torpedo marmorata (Marbled electric ray).